Reading from the N-terminus, the 337-residue chain is Phenylalanine--tRNA ligase alpha subunit (337 aa).

Glutamate 252 contacts Mg(2+).

It belongs to the class-II aminoacyl-tRNA synthetase family. Phe-tRNA synthetase alpha subunit type 1 subfamily. In terms of assembly, tetramer of two alpha and two beta subunits. It depends on Mg(2+) as a cofactor.

Its subcellular location is the cytoplasm. The enzyme catalyses tRNA(Phe) + L-phenylalanine + ATP = L-phenylalanyl-tRNA(Phe) + AMP + diphosphate + H(+). This Cellvibrio japonicus (strain Ueda107) (Pseudomonas fluorescens subsp. cellulosa) protein is Phenylalanine--tRNA ligase alpha subunit.